A 185-amino-acid chain; its full sequence is uncharacterized protein (185 aa).

Helical transmembrane passes span 1–19 and 105–125; these read MLNI…TSSA and AGFI…TMDV.

It is found in the membrane. This is an uncharacterized protein from Caenorhabditis elegans.